A 128-amino-acid polypeptide reads, in one-letter code: MAYVKERIYESMFIIAPNVPEEEREKLVERVKGIIEERVKGKIDKVERMGMRKFAYEIKKFSEGDYTVIYFRCDGQHLQELENFYRITPEIIRWQTFRRFDLEKKERKAQREKAAAEAIESSEGGSEA.

Belongs to the bacterial ribosomal protein bS6 family.

Functionally, binds together with bS18 to 16S ribosomal RNA. This chain is Small ribosomal subunit protein bS6, found in Thermotoga sp. (strain RQ2).